A 451-amino-acid chain; its full sequence is Exodeoxyribonuclease 7 large subunit (451 aa).

This sequence belongs to the XseA family. Heterooligomer composed of large and small subunits.

The protein localises to the cytoplasm. It carries out the reaction Exonucleolytic cleavage in either 5'- to 3'- or 3'- to 5'-direction to yield nucleoside 5'-phosphates.. In terms of biological role, bidirectionally degrades single-stranded DNA into large acid-insoluble oligonucleotides, which are then degraded further into small acid-soluble oligonucleotides. The sequence is that of Exodeoxyribonuclease 7 large subunit from Neisseria meningitidis serogroup C / serotype 2a (strain ATCC 700532 / DSM 15464 / FAM18).